The sequence spans 312 residues: DNA-directed RNA polymerase subunit alpha (312 aa).

The alpha N-terminal domain (alpha-NTD) stretch occupies residues 1-226; it reads MIEFEKPIIT…EHLNLFTDLT (226 aa). The segment at 243 to 312 is alpha C-terminal domain (alpha-CTD); it reads DEKVLDRTIE…DLGLGLKNDK (70 aa).

Belongs to the RNA polymerase alpha chain family. In terms of assembly, homodimer. The RNAP catalytic core consists of 2 alpha, 1 beta, 1 beta' and 1 omega subunit. When a sigma factor is associated with the core the holoenzyme is formed, which can initiate transcription.

It catalyses the reaction RNA(n) + a ribonucleoside 5'-triphosphate = RNA(n+1) + diphosphate. Its function is as follows. DNA-dependent RNA polymerase catalyzes the transcription of DNA into RNA using the four ribonucleoside triphosphates as substrates. This chain is DNA-directed RNA polymerase subunit alpha, found in Streptococcus mutans serotype c (strain ATCC 700610 / UA159).